Consider the following 348-residue polypeptide: Hereditary hemochromatosis protein homolog (348 aa).

The first 22 residues, Met-1–Gly-22, serve as a signal peptide directing secretion. The interval Arg-23–Glu-114 is alpha-1. Over Arg-23–Val-306 the chain is Extracellular. 3 N-linked (GlcNAc...) asparagine glycosylation sites follow: Asn-110, Asn-130, and Asn-234. The tract at residues Ser-115–Gln-205 is alpha-2. Cystine bridges form between Cys-124/Cys-187 and Cys-225/Cys-282. Residues Val-206 to Trp-297 form an alpha-3 region. Positions Pro-207–Thr-296 constitute an Ig-like C1-type domain. The tract at residues Glu-298 to Val-306 is connecting peptide. The chain crosses the membrane as a helical span at residues Thr-307–Arg-330. Residues Lys-331 to Glu-348 are Cytoplasmic-facing.

This sequence belongs to the MHC class I family. Binds TFR through the extracellular domain in a pH-dependent manner.

The protein resides in the cell membrane. Binds to transferrin receptor (TFR) and reduces its affinity for iron-loaded transferrin. The sequence is that of Hereditary hemochromatosis protein homolog (HFE) from Rhinoceros unicornis (Greater Indian rhinoceros).